Consider the following 198-residue polypeptide: Carnitine operon protein CaiE (198 aa).

The disordered stretch occupies residues 179 to 198 (VEENRPRLKGTTDVKPKSAQ). Residues 180 to 198 (EENRPRLKGTTDVKPKSAQ) are compositionally biased toward basic and acidic residues.

Belongs to the transferase hexapeptide repeat family.

It participates in amine and polyamine metabolism; carnitine metabolism. In terms of biological role, overproduction of CaiE stimulates the activity of CaiB and CaiD. In Salmonella choleraesuis (strain SC-B67), this protein is Carnitine operon protein CaiE.